Here is a 316-residue protein sequence, read N- to C-terminus: Apolipoprotein E (316 aa).

The signal sequence occupies residues 1–18; that stretch reads MKVLWVALVITLLAGCQA. Repeat copies occupy residues 79-100, 101-122, 123-144, 145-166, 167-188, 189-210, 211-232, and 233-254. The tract at residues 79-254 is 8 X 22 AA approximate tandem repeats; the sequence is VLMDETMKEV…HLEEMREQLE (176 aa). The segment at 157–167 is LDL and other lipoprotein receptors binding; that stretch reads HLRKLRKRLLR. 161–164 is a heparin binding site; sequence LRKR. The segment at 209–289 is lipid-binding and lipoprotein association; it reads AATVGTLASQ…SWFEPLVEDM (81 aa). 228 to 235 provides a ligand contact to heparin; sequence HQKLRGRM. The homooligomerization stretch occupies residues 265 to 316; that stretch reads SQMRLQAEAFQARLKSWFEPLVEDMQRQWAGLVEKVQLAMATGPTSAPIENN. The tract at residues 277–289 is specificity for association with VLDL; the sequence is RLKSWFEPLVEDM.

Belongs to the apolipoprotein A1/A4/E family. As to quaternary structure, homotetramer. May interact with ABCA1; functionally associated with ABCA1 in the biogenesis of HDLs. May interact with APP/A4 amyloid-beta peptide; the interaction is extremely stable in vitro but its physiological significance is unclear. May interact with MAPT. May interact with MAP2. In the cerebrospinal fluid, interacts with secreted SORL1. Interacts with PMEL; this allows the loading of PMEL luminal fragment on ILVs to induce fibril nucleation. In terms of processing, APOE exists as multiple glycosylated and sialylated glycoforms within cells and in plasma. The extent of glycosylation and sialylation are tissue and context specific. Glycated in plasma VLDL. Post-translationally, phosphorylated by FAM20C in the extracellular medium.

The protein resides in the secreted. It localises to the extracellular space. Its subcellular location is the extracellular matrix. It is found in the extracellular vesicle. The protein localises to the endosome. The protein resides in the multivesicular body. Its function is as follows. APOE is an apolipoprotein, a protein associating with lipid particles, that mainly functions in lipoprotein-mediated lipid transport between organs via the plasma and interstitial fluids. APOE is a core component of plasma lipoproteins and is involved in their production, conversion and clearance. Apolipoproteins are amphipathic molecules that interact both with lipids of the lipoprotein particle core and the aqueous environment of the plasma. As such, APOE associates with chylomicrons, chylomicron remnants, very low density lipoproteins (VLDL) and intermediate density lipoproteins (IDL) but shows a preferential binding to high-density lipoproteins (HDL). It also binds a wide range of cellular receptors including the LDL receptor/LDLR and the very low-density lipoprotein receptor/VLDLR that mediate the cellular uptake of the APOE-containing lipoprotein particles. Finally, APOE also has a heparin-binding activity and binds heparan-sulfate proteoglycans on the surface of cells, a property that supports the capture and the receptor-mediated uptake of APOE-containing lipoproteins by cells. The protein is Apolipoprotein E (APOE) of Tursiops truncatus (Atlantic bottle-nosed dolphin).